The sequence spans 156 residues: VapC ribonuclease AF_1683 (156 aa).

The 122-residue stretch at 4–125 folds into the PINc domain; it reads LIDTGIFFGF…KLISYDSRFS (122 aa). Residues aspartate 6 and aspartate 103 each coordinate Mg(2+).

The protein belongs to the PINc/VapC protein family. Mg(2+) is required as a cofactor.

In terms of biological role, toxic component of a type II toxin-antitoxin (TA) system. An RNase. This is VapC ribonuclease AF_1683 from Archaeoglobus fulgidus (strain ATCC 49558 / DSM 4304 / JCM 9628 / NBRC 100126 / VC-16).